The chain runs to 518 residues: G-protein coupled receptor 161 (518 aa).

Residues 1–26 (MNSSSDGANEGAGAAADNGPTKVAES) lie on the Extracellular side of the membrane. The N-linked (GlcNAc...) asparagine glycan is linked to Asn2. Residues 27–47 (IAIIIIDILICLGNLVIVVTL) form a helical membrane-spanning segment. The Cytoplasmic segment spans residues 48–59 (YKKSYLLSLSNK). Residues 60–80 (FVFSLTFSNLLLSMLVLPFVV) traverse the membrane as a helical segment. Residues 81–97 (VSSILREWIFGVVWCNF) lie on the Extracellular side of the membrane. A disulfide bridge links Cys95 with Cys173. The N-linked (GlcNAc...) asparagine glycan is linked to Asn96. The chain crosses the membrane as a helical span at residues 98–118 (SALLYMLISSASMLTLGIIAI). Residues 119–138 (DRYYAVLYPMVYPMKITGNR) are Cytoplasmic-facing. The chain crosses the membrane as a helical span at residues 139 to 159 (AVLALVYVWLHSLIGCLPPLF). The Extracellular portion of the chain corresponds to 160 to 185 (GWSTLEFDHFKWMCVAAWHKEAGYTA). A helical membrane pass occupies residues 186 to 206 (FWQVWCALLPFIVMMICYGFI). The Cytoplasmic segment spans residues 207–264 (FRVARIKARKIHCGTVIIVQEASQKNGRKNSSTSTSSSGSRKNGFSSIVYSANQCKAL). Residues 265-285 (ITILVVIGAFVLTWGPYMIVI) form a helical membrane-spanning segment. The Extracellular segment spans residues 286 to 301 (STEALKGKNSVSPVLE). Residues 302–322 (TLATWLSFTSAICHPLIYGLW) form a helical membrane-spanning segment. The Cytoplasmic segment spans residues 323 to 518 (NKTVRKELLG…GNIETSKCDV (196 aa)). Residues 429 to 448 (EVEQKNDARTMPTQPTAPSE) form a disordered region. The segment covering 439–448 (MPTQPTAPSE) has biased composition (polar residues).

The protein belongs to the G-protein coupled receptor 1 family.

Its subcellular location is the cell projection. The protein localises to the cilium membrane. The protein resides in the cell membrane. Functionally, key negative regulator of Shh signaling during neural tube development. Recruited to primary cilia and acts as a regulator of the PKA-dependent basal repression machinery in Shh signaling by increasing cAMP levels, leading to promote the PKA-dependent processing of gli3 into gli3r and repress the Shh signaling. In presence of shh, it is removed from primary cilia, preventing its activity and allowing activation of the Shh signaling. The polypeptide is G-protein coupled receptor 161 (gpr161) (Xenopus tropicalis (Western clawed frog)).